The primary structure comprises 512 residues: Glycosyltransferase sdnJ (512 aa).

Residues 1–24 form the signal peptide; that stretch reads MHAKRPSVLFFTISDFGYVNVVLA. N-linked (GlcNAc...) asparagine glycosylation occurs at Asn207.

The protein belongs to the UDP-glycosyltransferase family.

It carries out the reaction sordaricin + GDP-6-deoxy-alpha-D-altrose = 4'-O-demethylsordarin + GDP + H(+). It functions in the pathway antibiotic biosynthesis. Glycosyltransferase; part of the gene cluster that mediates the biosynthesis of sordarin and hypoxysordarin, glycoside antibiotics with a unique tetracyclic diterpene aglycone structure. First, the geranylgeranyl diphosphate synthase sdnC constructs GGDP from farnesyl diphosphate and isopentenyl diphosphate. The diterpene cyclase sdnA then catalyzes the cyclization of GGDP to afford cycloaraneosene. Cycloaraneosene is then hydroxylated four times by the putative cytochrome P450 monooxygenases sdnB, sdnE, sdnF and sdnH to give a hydroxylated cycloaraneosene derivative such as cycloaraneosene-8,9,13,19-tetraol. Although the order of the hydroxylations is unclear, at least C8, C9 and C13 of the cycloaraneosene skeleton are hydroxylated before the sordaricin formation. Dehydration of the 13-hydroxy group of the hydroxylated cycloaraneosene derivative might be catalyzed by an unassigned hypothetical protein such as sdnG and sdnP to construct the cyclopentadiene moiety. The FAD-dependent oxidoreductase sdnN is proposed to catalyze the oxidation at C9 of the hydroxylated cycloaraneosene derivative and also catalyze the Baeyer-Villiger oxidation to give the lactone intermediate. The presumed lactone intermediate would be hydrolyzed to give an acrolein moiety and a carboxylate moiety. Then, [4+2]cycloaddition would occur between the acrolein moiety and the cyclopentadiene moiety to give sordaricin. SdnN might also be involved in the [4+2]cycloaddition after the hypothesized oxidation to accommodate the oxidized product and prompt the [4+2]cycloaddition. GDP-6-deoxy-D-altrose may be biosynthesized from GDP-D-mannose by the putative GDP-mannose-4,6-dehydratase sdnI and the short-chain dehydrogenase sdnK. The glycosyltransferase sdnJ catalyzes the attachment of 6-deoxy-D-altrose onto the 19-hydroxy group of sordaricin to give 4'-O-demethylsordarin. The methyltransferase sdnD would complete the biosynthesis of sordarin. Sordarin can be further modified into hypoxysordarin. The unique acyl chain at the 3'-hydroxy group of hypoxysordarin would be constructed by an iterative type I PKS sdnO and the trans-acting polyketide methyltransferase sdnL. SdnL would be responsible for the introduction of an alpha-methyl group of the polyketide chain. Alternatively, the beta-lactamase-like protein sdnR might be responsible for the cleavage and transfer of the polyketide chain from the PKS sdnO to sordarin. Two putative cytochrome P450 monooxygenases, sdnQ and sdnT, might catalyze the epoxidations of the polyketide chain to complete the biosynthesis of hypoxysordarin. Transcriptional regulators sdnM and sdnS are presumably encoded for the transcriptional regulation of the expression of the sdn gene cluster. The protein is Glycosyltransferase sdnJ of Sordaria araneosa (Pleurage araneosa).